A 155-amino-acid chain; its full sequence is Fibroblast growth factor 1 (155 aa).

Residue Ala2 is modified to N-acetylalanine. A propeptide spanning residues Ala2–Arg15 is cleaved from the precursor. Residue Asn33 coordinates heparin. The heparin-binding stretch occupies residues Lys127–Lys143.

Belongs to the heparin-binding growth factors family. As to quaternary structure, monomer. Homodimer. Interacts with FGFR1, FGFR2, FGFR3 and FGFR4. Affinity between fibroblast growth factors (FGFs) and their receptors is increased by heparan sulfate glycosaminoglycans that function as coreceptors. Found in a complex with FGFBP1, FGF1 and FGF2. Interacts with FGFBP1. Part of a Cu(2+)-dependent multiprotein aggregate containing FGF1, S100A13 and SYT1. Interacts with SYT1. Interacts with S100A13. Interacts with LRRC59. Interacts with CSNKA, CSNKB and FIBP. While binding with LRRC59, CSNKA and FIBP seem mutually exclusive, CSNKB and FIBP may cooperatively interact with FGF1. Forms a ternary complex with FGFR1 and ITGAV:ITGB3 and induces the recruitment of PTPN11 to the complex. In the nucleus, phosphorylated by PKC/PRKCD.

It is found in the secreted. The protein resides in the cytoplasm. The protein localises to the cell cortex. It localises to the cytosol. Its subcellular location is the nucleus. In terms of biological role, plays an important role in the regulation of cell survival, cell division, angiogenesis, cell differentiation and cell migration. Functions as a potent mitogen in vitro. Acts as a ligand for FGFR1 and integrins. Binds to FGFR1 in the presence of heparin leading to FGFR1 dimerization and activation via sequential autophosphorylation on tyrosine residues which act as docking sites for interacting proteins, leading to the activation of several signaling cascades. Binds to integrin ITGAV:ITGB3. Its binding to integrin, subsequent ternary complex formation with integrin and FGFR1, and the recruitment of PTPN11 to the complex are essential for FGF1 signaling. Induces the phosphorylation and activation of FGFR1, FRS2, MAPK3/ERK1, MAPK1/ERK2 and AKT1. Can induce angiogenesis. This chain is Fibroblast growth factor 1 (FGF1), found in Mesocricetus auratus (Golden hamster).